Here is a 273-residue protein sequence, read N- to C-terminus: Dermonecrotic toxin LdSicTox-alphaIB1aii (273 aa).

The active site involves H5. Residues E25 and D27 each contribute to the Mg(2+) site. H41 (nucleophile) is an active-site residue. Intrachain disulfides connect C45–C51 and C47–C190. D85 serves as a coordination point for Mg(2+). N-linked (GlcNAc...) asparagine glycosylation is present at N250.

This sequence belongs to the arthropod phospholipase D family. Class II subfamily. Mg(2+) serves as cofactor. Expressed by the venom gland.

The protein resides in the secreted. The catalysed reaction is an N-(acyl)-sphingosylphosphocholine = an N-(acyl)-sphingosyl-1,3-cyclic phosphate + choline. It carries out the reaction an N-(acyl)-sphingosylphosphoethanolamine = an N-(acyl)-sphingosyl-1,3-cyclic phosphate + ethanolamine. It catalyses the reaction a 1-acyl-sn-glycero-3-phosphocholine = a 1-acyl-sn-glycero-2,3-cyclic phosphate + choline. The enzyme catalyses a 1-acyl-sn-glycero-3-phosphoethanolamine = a 1-acyl-sn-glycero-2,3-cyclic phosphate + ethanolamine. In terms of biological role, dermonecrotic toxins cleave the phosphodiester linkage between the phosphate and headgroup of certain phospholipids (sphingolipid and lysolipid substrates), forming an alcohol (often choline) and a cyclic phosphate. This toxin acts on sphingomyelin (SM). It may also act on ceramide phosphoethanolamine (CPE), lysophosphatidylcholine (LPC) and lysophosphatidylethanolamine (LPE), but not on lysophosphatidylserine (LPS), and lysophosphatidylglycerol (LPG). It acts by transphosphatidylation, releasing exclusively cyclic phosphate products as second products. Induces dermonecrosis, hemolysis, increased vascular permeability, edema, inflammatory response, and platelet aggregation. This chain is Dermonecrotic toxin LdSicTox-alphaIB1aii, found in Loxosceles deserta (Desert recluse spider).